The primary structure comprises 603 residues: DNA ligase (603 aa).

Glu-262 serves as a coordination point for ATP. The active-site N6-AMP-lysine intermediate is the Lys-264. 6 residues coordinate ATP: Arg-269, Arg-285, Glu-315, Phe-355, Arg-432, and Lys-438.

Belongs to the ATP-dependent DNA ligase family. The cofactor is Mg(2+).

The catalysed reaction is ATP + (deoxyribonucleotide)n-3'-hydroxyl + 5'-phospho-(deoxyribonucleotide)m = (deoxyribonucleotide)n+m + AMP + diphosphate.. Its function is as follows. DNA ligase that seals nicks in double-stranded DNA during DNA replication, DNA recombination and DNA repair. The protein is DNA ligase of Caldivirga maquilingensis (strain ATCC 700844 / DSM 13496 / JCM 10307 / IC-167).